The primary structure comprises 445 residues: Phosphoglucosamine mutase (445 aa).

Catalysis depends on serine 102, which acts as the Phosphoserine intermediate. 4 residues coordinate Mg(2+): serine 102, aspartate 241, aspartate 243, and aspartate 245. Serine 102 is subject to Phosphoserine.

The protein belongs to the phosphohexose mutase family. Requires Mg(2+) as cofactor. Post-translationally, activated by phosphorylation.

The enzyme catalyses alpha-D-glucosamine 1-phosphate = D-glucosamine 6-phosphate. Its function is as follows. Catalyzes the conversion of glucosamine-6-phosphate to glucosamine-1-phosphate. In Shewanella pealeana (strain ATCC 700345 / ANG-SQ1), this protein is Phosphoglucosamine mutase.